The sequence spans 502 residues: Probable cytochrome P450 313b1 (502 aa).

C449 is a heme binding site.

It belongs to the cytochrome P450 family. Requires heme as cofactor.

The protein localises to the endoplasmic reticulum membrane. Its subcellular location is the microsome membrane. In terms of biological role, may be involved in the metabolism of insect hormones and in the breakdown of synthetic insecticides. The sequence is that of Probable cytochrome P450 313b1 (Cyp313b1) from Drosophila melanogaster (Fruit fly).